The sequence spans 354 residues: Ferrochelatase (354 aa).

2 residues coordinate Fe cation: histidine 214 and glutamate 295.

Belongs to the ferrochelatase family.

The protein localises to the cytoplasm. It catalyses the reaction heme b + 2 H(+) = protoporphyrin IX + Fe(2+). Its pathway is porphyrin-containing compound metabolism; protoheme biosynthesis; protoheme from protoporphyrin-IX: step 1/1. Functionally, catalyzes the ferrous insertion into protoporphyrin IX. This Burkholderia ambifaria (strain ATCC BAA-244 / DSM 16087 / CCUG 44356 / LMG 19182 / AMMD) (Burkholderia cepacia (strain AMMD)) protein is Ferrochelatase.